The primary structure comprises 716 residues: MIYQSPTIQVELLEDNIARLCFNASGSVNKLDRETINSLDAALDAIQQDSHIQALVLTSAKGAFIVGADITEFLGLFAQEDSVLLPWIAEANVVFNKLEDLPFPTISAINGFALGGGFETVLATDFRIADTTAKIGLPETKLGLIPGFGGTVRLPRLIGTDNALEWITSGKDQRPEAALKVGAIDAVVAPENLQASAIKMLKDALAEKLDWQSRRARKQAALTLPKLEAMMSFATAKGMVFKIAGKHYPAPMAAISVIEQAARCGRADALKVEHQAFVKLAKTDVAQALIGIFLNDQLVKGKAKKAGKLAKNIDTAAVLGAGIMGGGIAYQSASKGTPIIMKDIAQPALELGLGEASKLLAAQIKRGRSTPQKMAKVLNNITATLDYTPVKDVDVVVEAVVEHPKVKSMVLAEVEQNVSDDAIITSNTSTISINLLAKSLKKPERFCGMHFFNPVHKMPLVEVIRGENSSEETIASVVAYASKMGKTPIVVNDCPGFFVNRVLFPYFAGFSGLLADGADFAAIDKVMEKQFGWPMGPAYLLDVVGIDTGHHAQAVMAEGFPDRMGKNGKDAIDIMFEAERFGQKNSKGFYAYSVDRRGKPKKDVDPTSYELLGAEFGELKAFESEDIIARTMIPMIIETVRCLEEGIIATPAEADMGLVFGLGFPPFRGGVFRYIDTMGVANFVALADKYAHLGGLYQVTDAMRELAANNGSYYQS.

An enoyl-CoA hydratase/isomerase region spans residues 1–189; sequence MIYQSPTIQV…KVGAIDAVVA (189 aa). Position 296 (aspartate 296) interacts with substrate. Residues 311 to 716 are 3-hydroxyacyl-CoA dehydrogenase; that stretch reads KNIDTAAVLG…AANNGSYYQS (406 aa). NAD(+) contacts are provided by residues methionine 324, aspartate 343, 400–402, lysine 407, and serine 429; that span reads VVE. The For 3-hydroxyacyl-CoA dehydrogenase activity role is filled by histidine 450. Asparagine 453 is an NAD(+) binding site. Residue asparagine 500 participates in substrate binding.

This sequence in the N-terminal section; belongs to the enoyl-CoA hydratase/isomerase family. In the C-terminal section; belongs to the 3-hydroxyacyl-CoA dehydrogenase family. In terms of assembly, heterotetramer of two alpha chains (FadB) and two beta chains (FadA).

It carries out the reaction a (3S)-3-hydroxyacyl-CoA + NAD(+) = a 3-oxoacyl-CoA + NADH + H(+). The enzyme catalyses a (3S)-3-hydroxyacyl-CoA = a (2E)-enoyl-CoA + H2O. It catalyses the reaction a 4-saturated-(3S)-3-hydroxyacyl-CoA = a (3E)-enoyl-CoA + H2O. The catalysed reaction is (3S)-3-hydroxybutanoyl-CoA = (3R)-3-hydroxybutanoyl-CoA. It carries out the reaction a (3Z)-enoyl-CoA = a 4-saturated (2E)-enoyl-CoA. The enzyme catalyses a (3E)-enoyl-CoA = a 4-saturated (2E)-enoyl-CoA. Its pathway is lipid metabolism; fatty acid beta-oxidation. Functionally, involved in the aerobic and anaerobic degradation of long-chain fatty acids via beta-oxidation cycle. Catalyzes the formation of 3-oxoacyl-CoA from enoyl-CoA via L-3-hydroxyacyl-CoA. It can also use D-3-hydroxyacyl-CoA and cis-3-enoyl-CoA as substrate. The protein is Fatty acid oxidation complex subunit alpha of Shewanella sediminis (strain HAW-EB3).